Here is a 287-residue protein sequence, read N- to C-terminus: Ribosomal RNA small subunit methyltransferase I (287 aa).

The protein belongs to the methyltransferase superfamily. RsmI family.

The protein resides in the cytoplasm. The catalysed reaction is cytidine(1402) in 16S rRNA + S-adenosyl-L-methionine = 2'-O-methylcytidine(1402) in 16S rRNA + S-adenosyl-L-homocysteine + H(+). Its function is as follows. Catalyzes the 2'-O-methylation of the ribose of cytidine 1402 (C1402) in 16S rRNA. This chain is Ribosomal RNA small subunit methyltransferase I, found in Streptococcus pyogenes serotype M6 (strain ATCC BAA-946 / MGAS10394).